We begin with the raw amino-acid sequence, 147 residues long: Small ribosomal subunit protein uS5 (147 aa).

Residues 9–72 enclose the S5 DRBM domain; the sequence is FEEVIVDIGR…DDAFKNIVEV (64 aa).

Belongs to the universal ribosomal protein uS5 family. In terms of assembly, part of the 30S ribosomal subunit. Contacts proteins S4 and S8.

In terms of biological role, with S4 and S12 plays an important role in translational accuracy. Located at the back of the 30S subunit body where it stabilizes the conformation of the head with respect to the body. This chain is Small ribosomal subunit protein uS5, found in Campylobacter jejuni subsp. jejuni serotype O:6 (strain 81116 / NCTC 11828).